A 290-amino-acid polypeptide reads, in one-letter code: Probable ECF RNA polymerase sigma factor SigI (290 aa).

A sigma-70 factor domain-2 region spans residues 11–74 (WRAHRAYLVD…LCLDHIKSAS (64 aa)). The short motif at 34-37 (DMVQ) is the Polymerase core binding element. Residues 110-162 (LALLIMLERLGPAERVVFVLHEIFGLPYQQIATTIGSQASTCRQLAHRARRKI) are sigma-70 factor domain-4_2. Positions 137–156 (YQQIATTIGSQASTCRQLAH) form a DNA-binding region, H-T-H motif.

It belongs to the sigma-70 factor family. ECF subfamily. Interacts transiently with the RNA polymerase catalytic core formed by RpoA, RpoB, RpoC and RpoZ (2 alpha, 1 beta, 1 beta' and 1 omega subunit) to form the RNA polymerase holoenzyme that can initiate transcription.

Its function is as follows. Sigma factors are initiation factors that promote the attachment of RNA polymerase to specific initiation sites and are then released. Extracytoplasmic function (ECF) sigma factors are held in an inactive form by a cognate anti-sigma factor until released, although no anti-sigma factor is known for this protein. The polypeptide is Probable ECF RNA polymerase sigma factor SigI (sigI) (Mycobacterium tuberculosis (strain CDC 1551 / Oshkosh)).